A 506-amino-acid chain; its full sequence is ATP synthase subunit alpha (506 aa).

170–177 (GDRQTGKT) lines the ATP pocket.

Belongs to the ATPase alpha/beta chains family. In terms of assembly, F-type ATPases have 2 components, CF(1) - the catalytic core - and CF(0) - the membrane proton channel. CF(1) has five subunits: alpha(3), beta(3), gamma(1), delta(1), epsilon(1). CF(0) has four main subunits: a(1), b(1), b'(1) and c(9-12).

The protein localises to the cellular thylakoid membrane. The enzyme catalyses ATP + H2O + 4 H(+)(in) = ADP + phosphate + 5 H(+)(out). In terms of biological role, produces ATP from ADP in the presence of a proton gradient across the membrane. The alpha chain is a regulatory subunit. The polypeptide is ATP synthase subunit alpha (Synechococcus sp. (strain CC9605)).